Reading from the N-terminus, the 55-residue chain is Small ribosomal subunit protein uS14 (55 aa).

Residues 1-20 (MSFEPSGPHSHRKPFGKGSR) are disordered. The Zn(2+) site is built by Cys-22, Cys-25, Cys-38, and Cys-41.

The protein belongs to the universal ribosomal protein uS14 family. Zn(2+) is required as a cofactor.

The sequence is that of Small ribosomal subunit protein uS14 (RPS29) from Encephalitozoon cuniculi (strain GB-M1) (Microsporidian parasite).